We begin with the raw amino-acid sequence, 507 residues long: Cytochrome P450 monooxygenase helB3 (507 aa).

The signal sequence occupies residues 1-25 (MAVATLISILFAVLALRLCYLLIHA). 3 N-linked (GlcNAc...) asparagine glycosylation sites follow: Asn-111, Asn-206, and Asn-339. Cys-435 is a heme binding site.

The protein belongs to the cytochrome P450 family. Heme is required as a cofactor.

It functions in the pathway mycotoxin biosynthesis. Functionally, cytochrome P450 monooxygenase; part of the gene cluster that mediates the biosynthesis of helvolic acid, an antibacterial nortriterpenoid. Protostadienol synthase helA cyclizes (3S)-oxidosqualene to (17Z)-protosta-17(20),24-dien-3-beta-ol (protostadienol). The synthesis of protostadienol is followed by several steps of monooxygenation, dehydrogenation, and acyl transfer to yield the final helvolic acid. Following the cyclization to the tetracyclic protostadienol by helA, cytochrome P450 monooxygenases helB1-mediated and helB2-mediated oxidation at C-4 and C-16, acyltransferase helD2-dependent acetylation of 16-OH, oxidation of C-21 by cytochrome P450 monooxygenase helB4, and short chain dehydrogenase helC-dependent oxidative decarboxylation yield the fusidane skeleton. This intermediate is further modified in three additional steps mediated by the cytochrome P450 monooxygenase helB3, the acyltransferase helD1, and the 3-ketosteroid 1-dehydrogenase helE to give helvolic acid. Compared with the late stages in the biosynthesis of helvolic acid, enzymes involved in the early stage modifications act in a relatively strict order. The hydroxylation of C-16 by helB1 and subsequent acetylation by helD2 should occur before the helB3-mediated oxidation of C-21. C-4 demethylation in fusidane-type antibiotics proceeds in an unusual manner though it is also achieved by oxidative decarboxylation. The methyl group at C-4 beta position is oxidized by helB1 and subsequently removed by the short chain dehydrogenase helC. The polypeptide is Cytochrome P450 monooxygenase helB3 (Aspergillus fumigatus (strain ATCC MYA-4609 / CBS 101355 / FGSC A1100 / Af293) (Neosartorya fumigata)).